The chain runs to 330 residues: tRNA(Ile)-lysidine synthase (330 aa).

ATP is bound at residue S31–S36.

It belongs to the tRNA(Ile)-lysidine synthase family.

It localises to the cytoplasm. The catalysed reaction is cytidine(34) in tRNA(Ile2) + L-lysine + ATP = lysidine(34) in tRNA(Ile2) + AMP + diphosphate + H(+). Functionally, ligates lysine onto the cytidine present at position 34 of the AUA codon-specific tRNA(Ile) that contains the anticodon CAU, in an ATP-dependent manner. Cytidine is converted to lysidine, thus changing the amino acid specificity of the tRNA from methionine to isoleucine. This is tRNA(Ile)-lysidine synthase from Synechocystis sp. (strain ATCC 27184 / PCC 6803 / Kazusa).